Consider the following 214-residue polypeptide: Pyridoxine/pyridoxamine 5'-phosphate oxidase (214 aa).

Substrate is bound by residues arginine 11–tyrosine 14 and lysine 68. FMN contacts are provided by residues arginine 63 to lysine 68, phenylalanine 78 to threonine 79, arginine 84, lysine 85, and glutamine 107. Residues tyrosine 125 and arginine 129 each contribute to the substrate site. FMN-binding positions include glutamine 142–serine 143 and tryptophan 187. Arginine 193 to histidine 195 contributes to the substrate binding site. Position 197 (arginine 197) interacts with FMN.

The protein belongs to the pyridoxamine 5'-phosphate oxidase family. Homodimer. It depends on FMN as a cofactor.

It catalyses the reaction pyridoxamine 5'-phosphate + O2 + H2O = pyridoxal 5'-phosphate + H2O2 + NH4(+). The catalysed reaction is pyridoxine 5'-phosphate + O2 = pyridoxal 5'-phosphate + H2O2. The protein operates within cofactor metabolism; pyridoxal 5'-phosphate salvage; pyridoxal 5'-phosphate from pyridoxamine 5'-phosphate: step 1/1. Its pathway is cofactor metabolism; pyridoxal 5'-phosphate salvage; pyridoxal 5'-phosphate from pyridoxine 5'-phosphate: step 1/1. In terms of biological role, catalyzes the oxidation of either pyridoxine 5'-phosphate (PNP) or pyridoxamine 5'-phosphate (PMP) into pyridoxal 5'-phosphate (PLP). The polypeptide is Pyridoxine/pyridoxamine 5'-phosphate oxidase (Blochmanniella floridana).